The sequence spans 2156 residues: Oxygen-regulated protein 1 (2156 aa).

Residues 1 to 19 (MSDTPSTGFSIIHPTSSEG) show a composition bias toward polar residues. The tract at residues 1–25 (MSDTPSTGFSIIHPTSSEGQVPPPR) is disordered. Doublecortin domains lie at 36–118 (KRIS…VDLD) and 154–233 (RSLV…GNYD). 4 disordered regions span residues 353-375 (VSKT…RTES), 666-686 (SSVA…SRYQ), 1438-1458 (DMEE…MTSS), and 1590-1621 (DWSD…TQEK).

As to quaternary structure, interacts (via the doublecortin domains) with microtubules. Interacts with RP1L1. Interacts with MAK. In terms of tissue distribution, expressed in retina. Not expressed in heart, brain, placenta, lung, liver, skeletal muscle, kidney, spleen and pancreas.

It localises to the cytoplasm. The protein localises to the cytoskeleton. It is found in the cilium axoneme. The protein resides in the cell projection. Its subcellular location is the cilium. It localises to the photoreceptor outer segment. In terms of biological role, microtubule-associated protein regulating the stability and length of the microtubule-based axoneme of photoreceptors. Required for the differentiation of photoreceptor cells, it plays a role in the organization of the outer segment of rod and cone photoreceptors ensuring the correct orientation and higher-order stacking of outer segment disks along the photoreceptor axoneme. The polypeptide is Oxygen-regulated protein 1 (RP1) (Homo sapiens (Human)).